The sequence spans 1906 residues: Serine protease/ABC transporter B family protein tagB (1906 aa).

A signal peptide spans 1–31 (MKFQFSSPSKIFLFSSVILILIFIGIKFELL). Residues 96–134 (INNNNNNNNKLNNNNNNNNNNNNNNNNNNNNNNNNNNNN) are disordered. Residues 356–763 (PTVIFGTKDK…ASSTNPSNAI (408 aa)) enclose the Peptidase S8 domain. Active-site charge relay system residues include D387 and H432. N-linked (GlcNAc...) asparagine glycans are attached at residues N594, N621, and N672. Residue S695 is the Charge relay system of the active site. N747 and N823 each carry an N-linked (GlcNAc...) asparagine glycan. The next 3 membrane-spanning stretches (helical) occupy residues 1011 to 1031 (YIII…LMWI), 1076 to 1096 (FIIE…ASIL), and 1121 to 1141 (FIII…GSWI). Positions 1080–1363 (LTIATACSLV…LFGVYVSYIQ (284 aa)) constitute an ABC transmembrane type-1 domain. The N-linked (GlcNAc...) asparagine glycan is linked to N1172. 3 consecutive transmembrane segments (helical) span residues 1210 to 1230 (LVFI…AVPI), 1309 to 1329 (WLLI…LVIQ), and 1332 to 1352 (FTVG…DASS). The tract at residues 1385–1455 (LEEEEADRLA…NNNNNIGNLD (71 aa)) is disordered. Over residues 1396-1405 (LSGGGGGGGD) the composition is skewed to gly residues. Positions 1407 to 1420 (GDDKKDKQNIENGK) are enriched in basic and acidic residues. One can recognise an ABC transporter domain in the interval 1518-1756 (IEFKNVSFRY…KGKYYRMFSE (239 aa)). N-linked (GlcNAc...) asparagine glycosylation occurs at N1522. 1553 to 1560 (GPSGSGKS) contacts ATP. N-linked (GlcNAc...) asparagine glycosylation is present at N1658. A disordered region spans residues 1757 to 1906 (DKDDTPLQNN…QMDEENDEER (150 aa)). 2 stretches are compositionally biased toward low complexity: residues 1765–1779 (NNNN…NNNN) and 1814–1871 (EQQE…DYDQ). Pro residues predominate over residues 1872-1886 (VPPPPPLPSESPSPP).

It in the C-terminal section; belongs to the ABC transporter superfamily. ABCB family. Multidrug resistance exporter (TC 3.A.1.201) subfamily. The protein in the N-terminal section; belongs to the peptidase S8 family.

The protein localises to the membrane. Its function is as follows. Intercellular communication via tagB may mediate integration of cellular differentiation with morphogenesis. The chain is Serine protease/ABC transporter B family protein tagB (tagB) from Dictyostelium discoideum (Social amoeba).